An 85-amino-acid polypeptide reads, in one-letter code: Large ribosomal subunit protein bL27 (85 aa).

Residues 1-21 (MAHKKAGGSTRNGRDSESKRL) form a disordered region.

The protein belongs to the bacterial ribosomal protein bL27 family.

This chain is Large ribosomal subunit protein bL27, found in Pseudomonas putida (strain W619).